The sequence spans 714 residues: MSPEGEESHAEDNLYFHNTQMQSIHEETLAEESHAQSIQRSISRLSSFKHEDTDSESPIPVQKVIRHIKKTNTNTNTTKTKKRKLKVSKPRKNMSSSESVRQMYGSRKNGEQQGSIDGFLMSRFGDVDGCNESDRSSKLISQGEWESLSKFHEESNEKDKLLRKKIQRYYSEPQEELGEGCGMLSQASADPETKMTKEELESLYDLDSSTVFNQTTISAIGDMSEPTQVSEPCVVILSQTKVQSEASTQEDGADASVQEIKSSVPTQELFSTPEFVPAPLEQPVNKEVCSDQSIVVLEENVQSTQADDSDIVELISDSDPEPEEVSTKVQVLRSIYDSSGPVNDKQPSVASETVESDSTPIVSPVKTPQGTRMHVVQVASSNPSSPIKIVEENTEQQEEVFTDVESIYSTARTSFGTPKHTSPVILLESSDTDCDDNDNDVEPLSSMPMVKTVPKKRMRTTVLQVSAALKVQNYTDEKNNIKLRKIGDDIPVEVPTKDVEYEEIPDSQESVGGEGDNSVSIIEITREVHNNDYTGDESTDLFQVGLNKQDTCEDTSSPVVQIGGVENDILDSSLIEPVPEPESVPVPEEVQEQPQPTAIDKHTATQLREKFQLWGLKPVRGKEKMVEILQGISNFILPEHELLAVADKQELQSCIFMKLDAVIREGRAMYDRILSFEPIRIEELQMMLQSQDYYLELDVLRLYCDSSGITTTNA.

2 stretches are compositionally biased toward basic and acidic residues: residues 1-14 (MSPEGEESHAEDNL) and 24-34 (IHEETLAEESH). Disordered stretches follow at residues 1–116 (MSPE…QGSI) and 337–369 (DSSGPVNDKQPSVASETVESDSTPIVSPVKTPQ). Low complexity predominate over residues 36–46 (QSIQRSISRLS). The span at 79–92 (KTKKRKLKVSKPRK) shows a compositional bias: basic residues.

The protein belongs to the SLX4 family. Forms a heterodimer with SLX1. In terms of processing, phosphorylated in response to DNA damage.

Its subcellular location is the nucleus. Regulatory subunit of the SLX1-SLX4 structure-specific endonuclease that resolves DNA secondary structures generated during DNA repair and recombination. Has endonuclease activity towards branched DNA substrates, introducing single-strand cuts in duplex DNA close to junctions with ss-DNA. The protein is Structure-specific endonuclease subunit SLX4 1 of Candida tropicalis (strain ATCC MYA-3404 / T1) (Yeast).